A 234-amino-acid chain; its full sequence is ATP-dependent dethiobiotin synthetase BioD (234 aa).

12-17 (GAGKTI) provides a ligand contact to ATP. Thr-16 is a Mg(2+) binding site. Lys-39 is an active-site residue. Thr-43 is a substrate binding site. ATP-binding positions include Asp-47, 108 to 111 (EGLG), 168 to 169 (SC), and 200 to 202 (PYL). Mg(2+)-binding residues include Asp-47 and Glu-108.

Belongs to the dethiobiotin synthetase family. As to quaternary structure, homodimer. Mg(2+) serves as cofactor.

It is found in the cytoplasm. It catalyses the reaction (7R,8S)-7,8-diammoniononanoate + CO2 + ATP = (4R,5S)-dethiobiotin + ADP + phosphate + 3 H(+). The catalysed reaction is (7R,8S)-8-amino-7-(carboxyamino)nonanoate + ATP = (4R,5S)-dethiobiotin + ADP + phosphate + H(+). The protein operates within cofactor biosynthesis; biotin biosynthesis; biotin from 7,8-diaminononanoate: step 1/2. In terms of biological role, catalyzes a mechanistically unusual reaction, the ATP-dependent insertion of CO2 between the N7 and N8 nitrogen atoms of 7,8-diaminopelargonic acid (DAPA, also called 7,8-diammoniononanoate) to form a ureido ring. This cyanobacterium does not encode bioA (which catalyzes the formation of the precursor for this reaction in the cannonical pathway), instead it encodes bioU, which replaces bioA and also performs the first half of the cannonical BioD reaction. Thus in this organism BioD has a different substrate. This Rippkaea orientalis (strain PCC 8801 / RF-1) (Cyanothece sp. (strain PCC 8801)) protein is ATP-dependent dethiobiotin synthetase BioD.